The primary structure comprises 63 residues: Metallothionein-2 (63 aa).

The protein belongs to the metallothionein superfamily. Type 6 family.

Functionally, this protein binds cations of several transition elements. In Caenorhabditis elegans, this protein is Metallothionein-2 (mtl-2).